We begin with the raw amino-acid sequence, 96 residues long: Co-chaperonin GroES (96 aa).

It belongs to the GroES chaperonin family. Heptamer of 7 subunits arranged in a ring. Interacts with the chaperonin GroEL.

It localises to the cytoplasm. In terms of biological role, together with the chaperonin GroEL, plays an essential role in assisting protein folding. The GroEL-GroES system forms a nano-cage that allows encapsulation of the non-native substrate proteins and provides a physical environment optimized to promote and accelerate protein folding. GroES binds to the apical surface of the GroEL ring, thereby capping the opening of the GroEL channel. This is Co-chaperonin GroES from Colwellia maris.